An 85-amino-acid polypeptide reads, in one-letter code: U4-theraphotoxin-Hhn1a (85 aa).

An N-terminal signal peptide occupies residues methionine 1–glutamate 22. The propeptide occupies glutamate 23–arginine 48. Disulfide bonds link cysteine 52-cysteine 66, cysteine 56-cysteine 77, and cysteine 71-cysteine 82.

This sequence belongs to the neurotoxin 12 (Hwtx-2) family. 02 (Hwtx-2) subfamily. As to quaternary structure, monomer. Expressed by the venom gland.

It localises to the secreted. Its function is as follows. Neurotoxin active on both insects and mammals. The protein is U4-theraphotoxin-Hhn1a of Cyriopagopus hainanus (Chinese bird spider).